Consider the following 278-residue polypeptide: Indole-3-glycerol phosphate synthase (278 aa).

Belongs to the TrpC family.

The enzyme catalyses 1-(2-carboxyphenylamino)-1-deoxy-D-ribulose 5-phosphate + H(+) = (1S,2R)-1-C-(indol-3-yl)glycerol 3-phosphate + CO2 + H2O. It functions in the pathway amino-acid biosynthesis; L-tryptophan biosynthesis; L-tryptophan from chorismate: step 4/5. The protein is Indole-3-glycerol phosphate synthase of Pseudomonas fluorescens (strain SBW25).